Here is an 877-residue protein sequence, read N- to C-terminus: Dystroglycan 1 (877 aa).

The signal sequence occupies residues 1–29 (MRMSAGLSLLIPLWGRTFLLLLSVAVTQS). A required for laminin recognition region spans residues 30–408 (RWPSEPSDAV…GHIRPTMTIP (379 aa)). Residues 49-71 (SMHSVLSDLHEAVPTVVGIPDGT) form an O-glycosylated at one site region. N-linked (GlcNAc...) asparagine glycosylation is present at asparagine 141. Cysteine 182 and cysteine 264 form a disulfide bridge. The tract at residues 316–468 (ATPTPVTAIG…PPTRIRTTTS (153 aa)) is mucin-like domain. Threonine 317, threonine 319, and threonine 379 each carry an O-linked (Man6P...) threonine glycan. Disordered regions lie at residues 380 to 444 (PTLG…PVPR) and 458 to 480 (SPPTRIRTTTSGLPRGEPNQRPE). Over residues 413–433 (PTAVATPPTPTTKNPRVSXPT) the composition is skewed to low complexity. An O-glycosylated at seven sites with GalNAc region spans residues 446–468 (TTKAPITRLETASPPTRIRTTTS). The Peptidase S72 domain maps to 585 to 694 (RAPARFTAKF…MSIAVTGSGS (110 aa)). 3 N-linked (GlcNAc...) asparagine glycosylation sites follow: asparagine 623, asparagine 631, and asparagine 643. Cysteines 651 and 695 form a disulfide. The segment covering 706–717 (PKRVPSEAPPTE) has biased composition (pro residues). Residues 706-727 (PKRVPSEAPPTEVPDRDPEKSS) are disordered. Basic and acidic residues predominate over residues 718-727 (VPDRDPEKSS). Residues 732–757 (YLHTVIPAVVVAAILLIAGIIAMICY) traverse the membrane as a helical segment. Residues 758–764 (RKKRKGK) carry the Nuclear localization signal motif. Threonine 772 is modified (phosphothreonine). Positions 801 to 877 (LQEEKAPLPP…YRSPPPYVPP (77 aa)) are required for interaction with CAV3. Residues 805 to 877 (KAPLPPPEYP…YRSPPPYVPP (73 aa)) form a disordered region. Positions 814-828 (PNQSVPETTPLNQDT) are enriched in polar residues. The span at 841 to 852 (NAPPYQPPPPFT) shows a compositional bias: pro residues. Residues 862 to 877 (PKNMTPYRSPPPYVPP) are required for binding DMD and UTRN. A PPXY motif motif is present at residues 871-874 (PPPY). Tyrosine 874 is subject to Phosphotyrosine; by SRC.

In terms of assembly, monomer. Heterodimer of alpha- and beta-dystroglycan subunits which are the central components of the dystrophin-glycoprotein complex. This complex then can form a dystrophin-associated glycoprotein complex (DGC) which is composed of three subcomplexes: a cytoplasmic complex comprised of DMD (or UTRN), DTNA and a number of syntrophins, such as SNTB1, SNTB2, SNTG1 and SNTG2, the transmembrane dystroglycan complex, and the sarcoglycan-sarcospan complex. Interacts (via the N-terminal of alphaDAG1) with LARGE1; the interaction enhances laminin binding. Interacts with SGCD. Interacts with AGR2 and AGR3. Interacts (betaDAG1) with DMD; the interaction is inhibited by phosphorylation on the PPXY motif. Interacts (betaDAG1, via its PPXY motif) with UTRN (via its WWW and ZZ domains); the interaction is inhibited by phosphorylation on the PPXY motif. Interacts (betaDAG1, via its phosphorylated PPXY motif) with the SH2 domain-containing proteins, FYN, CSK, NCK and SHC. Interacts (betaDAG1) with CAV3 (via a central WW-like domain); the interaction disrupts the binding of DMD. BetaDAG1 directly interacts with ANK3, but not with ANK2; this interaction does not interfere with DMD-binding and is required for retention at costameres. Identified in a dystroglycan complex that contains at least PRX, DRP2, UTRN, DMD and DAG1. Interacts with POMGNT1. BetaDAG1 interacts with CD93. In terms of processing, O-glycosylated. POMGNT1 catalyzes the initial addition of N-acetylglucosamine, giving rise to the GlcNAc(beta1-2)Man(alpha1-)O-Ser/Thr moiety and thus providing the necessary basis for the addition of further carbohydrate moieties. Heavily O-glycosylated comprising of up to two thirds of its mass and the carbohydrate composition differs depending on tissue type. Mucin-type O-glycosylation is important for ligand binding activity. O-mannosylation of alpha-DAG1 is found in high abundance in both brain and muscle where the most abundant glycan is Sia-alpha-2-3-Gal-beta-1-4-Glc-NAc-beta-1-2-Man. In muscle, glycosylation on Thr-317, Thr-319 and Thr-379 by a phosphorylated O-mannosyl glycan with the structure 2-(N-acetylamido)-2-deoxygalactosyl-beta-1,3-2-(N-acetylamido)-2-deoxyglucosyl-beta-1,4-6-phosphomannose is mediated by like-acetylglucosaminyltransferase (LARGE1) protein amd is required for laminin binding. O-glycosylated in the N-terminal region with a core 1 or possibly core 8 glycan. The brain form displays a unique glycosylation pattern which is absent in other tissues; this form shows enhanced binding to laminin LAMA5 compared to the skeletal muscle form. Post-translationally, N-glycosylated. Autolytic cleavage produces the alpha and beta subunits. In cutaneous cells, as well as in certain pathological conditions, shedding of beta-dystroglycan can occur releasing a peptide of about 30 kDa. In terms of processing, SRC-mediated phosphorylation of the PPXY motif of the beta subunit recruits SH2 domain-containing proteins, but inhibits binding to WWW domain-containing proteins, DMD and UTRN. This phosphorylation also inhibits nuclear entry.

Its subcellular location is the secreted. The protein localises to the extracellular space. The protein resides in the cell membrane. It is found in the cytoplasm. It localises to the cytoskeleton. Its subcellular location is the nucleus. The protein localises to the nucleoplasm. The protein resides in the sarcolemma. It is found in the postsynaptic cell membrane. The dystroglycan complex is involved in a number of processes including laminin and basement membrane assembly, sarcolemmal stability, cell survival, peripheral nerve myelination, nodal structure, cell migration, and epithelial polarization. In terms of biological role, extracellular peripheral glycoprotein that acts as a receptor for extracellular matrix proteins containing laminin-G domains. Receptor for laminin-2 (LAMA2) and agrin in peripheral nerve Schwann cells. Also acts as a receptor for laminin LAMA5. Its function is as follows. Transmembrane protein that plays important roles in connecting the extracellular matrix to the cytoskeleton. Acts as a cell adhesion receptor in both muscle and non-muscle tissues. Receptor for both DMD and UTRN and, through these interactions, scaffolds axin to the cytoskeleton. Also functions in cell adhesion-mediated signaling and implicated in cell polarity. This Sus scrofa (Pig) protein is Dystroglycan 1.